The sequence spans 410 residues: NIPA-like protein 3 (410 aa).

The segment at 1–24 (MDGAHSAGLQLQPLPPTSGATSTS) is disordered. Transmembrane regions (helical) follow at residues 37–57 (NLIG…ALNL), 80–100 (WWLG…SYAF), 105–125 (LIVP…IIFI), 139–159 (VLSF…VTFA), 175–195 (LVSW…CLLL), 206–226 (IVVI…TVKA), 244–264 (PIFY…ATFL), 275–295 (LIAS…GAIF), and 304–324 (ALHI…VFLI). Serine 376 is modified (phosphoserine). The disordered stretch occupies residues 389–410 (EEHSSRSTPGVPYRVLEHTKKE).

The protein belongs to the NIPA family.

It localises to the membrane. The protein is NIPA-like protein 3 (Nipal3) of Mus musculus (Mouse).